The chain runs to 553 residues: MSLLVVAPEWLTSAAAELQSIESALSAANAAAAVPTTGLAAAAADEVSTAVATLFAGFGQEYQAISTQLSAFQQQFALTLNSSAGSYSAAEAQSVSILDTLGQDVFGAINAPTEALLGRPLIGNGANGTATSPNGGAGGLLFGNGGIGYSQTGAGIVGGAGGSAGLIGNGGAGGTGGAGATGGAGGNGGWLFGSGGIGGTGGANALGTGGTGGLGGSAGLFGGGGNGGAGGLGISGDLGTGGAGGTGGFLLGDYGVSGAGGDGRTVPLEVVNVTEPVVNVNVNGGHSTPVLIDTGSAGLVMQVKDVGGPLGLLRMGLPSGISMSAYSGGLTYLFATYPTTVDFGNGIVTSTTGVDVVLFSIPTSPYALTTWLNALWSNPLTTPFDAYFQSAGVDGVLGVGPNAVGPGPSIPTQALGGGLGQGLLIDMKGGELVFGPNPLTPEFSISGAPIATLWVSVNGGAPVAVPSIIDSGGVMGTIPSSVIGGSTLPANTNITVYTDNTMTTEVYHYSTNDYQPTVISSGLMNTGFLPFWNQPVYIDYSPAGTGTTVFDMP.

In terms of domain architecture, PE spans 1 to 92; sequence MSLLVVAPEW…SAGSYSAAEA (92 aa). Aspartate 293 is an active-site residue.

Belongs to the mycobacterial PE family. PGRS subfamily. Post-translationally, undergoes auto-proteolytic processing.

It is found in the secreted. It localises to the cell surface. In terms of biological role, aspartic protease that processes the lipase LipY and other PE_PGRS proteins. Can also cleave itself. Cleaves LipY both inside the PE domain, before amino acid 98, and after amino acids 136 and 149. Involved in virulence. This chain is PE cleavage protein A, found in Mycobacterium marinum (strain ATCC BAA-535 / M).